We begin with the raw amino-acid sequence, 238 residues long: Ribosomal RNA small subunit methyltransferase G (238 aa).

S-adenosyl-L-methionine-binding positions include Gly-77, Phe-82, 128-129, and Arg-147; that span reads AE. Residues 216–238 are disordered; that stretch reads RKERSTPKKYPRKPGTPNKQPLS.

This sequence belongs to the methyltransferase superfamily. RNA methyltransferase RsmG family.

The protein resides in the cytoplasm. Its function is as follows. Specifically methylates the N7 position of guanine in position 535 of 16S rRNA. This Halalkalibacterium halodurans (strain ATCC BAA-125 / DSM 18197 / FERM 7344 / JCM 9153 / C-125) (Bacillus halodurans) protein is Ribosomal RNA small subunit methyltransferase G.